We begin with the raw amino-acid sequence, 129 residues long: uncharacterized protein (129 aa).

Residues 1-129 form a disordered region; that stretch reads MGRMASPLRS…PARQSARMAR (129 aa). Residues 18 to 46 show a composition bias toward basic and acidic residues; sequence ESTRHKETSTVRVETSSHREETSSHRVET. The span at 47-59 shows a compositional bias: low complexity; that stretch reads SSRQVRTSSRQVE. Positions 70–97 are enriched in polar residues; it reads LTPSTKRLPQFLEVSSQHVETSSQCTET.

This is an uncharacterized protein from Mus musculus (Mouse).